The sequence spans 104 residues: Large ribosomal subunit protein uL24 (104 aa).

It belongs to the universal ribosomal protein uL24 family. As to quaternary structure, part of the 50S ribosomal subunit.

In terms of biological role, one of two assembly initiator proteins, it binds directly to the 5'-end of the 23S rRNA, where it nucleates assembly of the 50S subunit. One of the proteins that surrounds the polypeptide exit tunnel on the outside of the subunit. The chain is Large ribosomal subunit protein uL24 from Pectobacterium atrosepticum (strain SCRI 1043 / ATCC BAA-672) (Erwinia carotovora subsp. atroseptica).